The primary structure comprises 257 residues: MEKPVICRIKEIIEESPTVKTFVVDKDFDFKPGQFAMLWLPGVDEKPFGFSSKNSFSVARVGEFTKKMHELKEGDIIGVRGPYGTYFEPIGDKVLAVAGGIGAAPIITAVEEFSKQGIEITTILGARTKEELLFLDRFEKVSRLEICTDDGSFGFKGFTTEKMKEVLKEEKFDLIITCGPEIMMKKVVEIANEYNIPVQVSMERYMKCGIGICGQCCVDDEGLCVCKDGPVFWGDKLKFIREFGKYKRDASGKKIYY.

An FAD-binding FR-type domain is found at 2–89 (EKPVICRIKE…RGPYGTYFEP (88 aa)). The [2Fe-2S] cluster site is built by cysteine 208, cysteine 213, cysteine 216, and cysteine 226.

Belongs to the PyrK family. As to quaternary structure, heterotetramer of 2 PyrK and 2 PyrD type B subunits. Requires [2Fe-2S] cluster as cofactor. FAD is required as a cofactor.

It participates in pyrimidine metabolism; UMP biosynthesis via de novo pathway; orotate from (S)-dihydroorotate (NAD(+) route): step 1/1. Its function is as follows. Responsible for channeling the electrons from the oxidation of dihydroorotate from the FMN redox center in the PyrD type B subunit to the ultimate electron acceptor NAD(+). The polypeptide is Probable dihydroorotate dehydrogenase B (NAD(+)), electron transfer subunit (Methanocaldococcus jannaschii (strain ATCC 43067 / DSM 2661 / JAL-1 / JCM 10045 / NBRC 100440) (Methanococcus jannaschii)).